Here is a 1286-residue protein sequence, read N- to C-terminus: Structural maintenance of chromosomes protein 4 (1286 aa).

The segment at 1–51 (MRRKGTKPSTACHQEEGPPPSQDGAHSDEEMEQPAGEAESAAPAKPPGEEL) is disordered. 3 positions are modified to phosphoserine: Ser21, Ser27, and Ser40. Position 111–118 (111–118 (GPNGSGKS)) interacts with ATP. Position 141 is a phosphoserine (Ser141). The stretch at 270–589 (RRVEILNEHR…KVEEAKSSLA (320 aa)) forms a coiled coil. Lys379 and Lys677 each carry N6-acetyllysine. The 115-residue stretch at 611–725 (PGIYGRLGDL…ANNLDQATRV (115 aa)) folds into the SMC hinge domain. 2 coiled-coil regions span residues 768-1018 (EISV…KLEQ) and 1068-1133 (ESIT…LNEF). At Ser980 the chain carries Phosphoserine.

It belongs to the SMC family. SMC4 subfamily. As to quaternary structure, forms a heterodimer with SMC2. Component of the condensin complex, which contains the SMC2 and SMC4 heterodimer, and three non SMC subunits that probably regulate the complex: BRRN1/CAPH, CNAP1/CAPD2 and CAPG.

The protein resides in the nucleus. The protein localises to the cytoplasm. It localises to the chromosome. Central component of the condensin complex, a complex required for conversion of interphase chromatin into mitotic-like condense chromosomes. The condensin complex probably introduces positive supercoils into relaxed DNA in the presence of type I topoisomerases and converts nicked DNA into positive knotted forms in the presence of type II topoisomerases. This chain is Structural maintenance of chromosomes protein 4 (Smc4), found in Mus musculus (Mouse).